We begin with the raw amino-acid sequence, 110 residues long: MNEEMEQIIFQIILHGGNGRSSAMEAIAAAKSGDAEEARKKLQDAAEELSKAHHYQTELIQNEAGGEKTEMTLLMVHAQDHLMNAMTVKDMAAEIIELYEKITEQRGASI.

One can recognise a PTS EIIA type-3 domain in the interval Glu3–Lys101. The Tele-phosphohistidine intermediate; by HPr role is filled by His77.

It is found in the cytoplasm. The phosphoenolpyruvate-dependent sugar phosphotransferase system (PTS), a major carbohydrate active -transport system, catalyzes the phosphorylation of incoming sugar substrates concomitant with their translocation across the cell membrane. This system is involved in lichenan transport. The chain is Lichenan-specific phosphotransferase enzyme IIA component (licA) from Bacillus subtilis (strain 168).